The sequence spans 64 residues: MTKGTPSQGKHNKGSNHIVCRRCGRRSFHVRKKVCAACGFGKSSKIKRFAWQWKKVTGKGNRVK.

The Zn(2+) site is built by cysteine 20, cysteine 23, cysteine 35, and cysteine 38. The C4-type zinc finger occupies 20–38 (CRRCGRRSFHVRKKVCAAC).

The protein belongs to the eukaryotic ribosomal protein eL37 family. Zn(2+) is required as a cofactor.

Binds to the 23S rRNA. The chain is Large ribosomal subunit protein eL37 from Methanococcus maripaludis (strain C5 / ATCC BAA-1333).